Here is a 321-residue protein sequence, read N- to C-terminus: Fibronectin type III domain-containing protein 8 (321 aa).

In terms of domain architecture, Fibronectin type-III spans 175-277 (VPEVPFICEH…KPYKFATVST (103 aa)).

This Mus musculus (Mouse) protein is Fibronectin type III domain-containing protein 8 (Fndc8).